The sequence spans 386 residues: Succinate--CoA ligase [ADP-forming] subunit beta (386 aa).

The 236-residue stretch at 9–244 folds into the ATP-grasp domain; sequence KDLLTAYQLP…PSQENIRDVL (236 aa). ATP contacts are provided by residues Lys46, 53–55, Val102, and Glu107; that span reads GRG. Residues Asn199 and Asp213 each contribute to the Mg(2+) site. Residues Asn264 and 321–323 contribute to the substrate site; that span reads GIM.

This sequence belongs to the succinate/malate CoA ligase beta subunit family. In terms of assembly, heterotetramer of two alpha and two beta subunits. The cofactor is Mg(2+).

The catalysed reaction is succinate + ATP + CoA = succinyl-CoA + ADP + phosphate. The enzyme catalyses GTP + succinate + CoA = succinyl-CoA + GDP + phosphate. It participates in carbohydrate metabolism; tricarboxylic acid cycle; succinate from succinyl-CoA (ligase route): step 1/1. Its function is as follows. Succinyl-CoA synthetase functions in the citric acid cycle (TCA), coupling the hydrolysis of succinyl-CoA to the synthesis of either ATP or GTP and thus represents the only step of substrate-level phosphorylation in the TCA. The beta subunit provides nucleotide specificity of the enzyme and binds the substrate succinate, while the binding sites for coenzyme A and phosphate are found in the alpha subunit. The chain is Succinate--CoA ligase [ADP-forming] subunit beta from Chlamydia trachomatis serovar L2 (strain ATCC VR-902B / DSM 19102 / 434/Bu).